A 239-amino-acid chain; its full sequence is MGASIDDYSLVHKNILHSEDLLKYILETSAYPREHEQLKGLREVTEKHEWSSALVPADEGLFLSMLLKLMNAKRTIEIGVYTGYSLLTTALALPEDGKITAIDVNKSYYEIGLPFIQKAGVEHKINFIESEALPVLDQMLEEMKEEDLYDYAFVDADKSNYANYHERLVKLVRIGGAILYDNTLWYGSVAYPEYPGLHPEEEVARLSFRNLNTFLAADPRVEISQVSIGDGVTICRRLY.

S-adenosyl-L-methionine-binding positions include V55, E77, 79-80, S85, D103, and A132; that span reads GV. D155 contacts a divalent metal cation. Position 157 (D157) interacts with S-adenosyl-L-methionine. D181 and N182 together coordinate a divalent metal cation.

This sequence belongs to the class I-like SAM-binding methyltransferase superfamily. Cation-dependent O-methyltransferase family. The cofactor is Mg(2+). Highly expressed in bulbs. Detected in leaves and inflorescences.

The catalysed reaction is norbelladine + S-adenosyl-L-methionine = 4'-O-methylnorbelladine + S-adenosyl-L-homocysteine + H(+). Its pathway is alkaloid biosynthesis. 4'-O-methyltransferase converting norbelladine to 4'-O-methylnorbelladine. 4'-O-methylnorbelladine is a precursor to all Amaryllidaceae alkaloids such as galanthamine, lycorine and haemanthamine, and including haemanthamine- and crinamine-type alkaloids, promising anticancer agents. Can use norbelladine, N-methylnorbelladine and dopamine as substrate, but not caffeic acid, vanillin, 3,4-dihydroxybenzaldehyde and tyramine. The polypeptide is Norbelladine 4'-O-methyltransferase (Narcissus aff. pseudonarcissus MK-2014 (Daffodil)).